Consider the following 353-residue polypeptide: MMQPYLRPDLDRLQAYHAPHFPEADKLDANELPHDLPEWLKNKLAFLLEQGVRTNRYPEGDPLALKAAIAEYCGVTSEMVCVGNGSDELIRSLITATCLGGRGTVASAEPTFSMYRILAETLAVPYIGVARTANYGVDADVLEAAVGANGVRVLFLANPNSPTGNLLSDEIIERLGSLPVLVVLDEAYYEFSRFSAVPLLWERPNLVILRTFSKAFRLANFRVGYALANPEIAAVLEKVRLPYNLPGLSQLAAFAALEHRDVLLAAIPEILAERRRIERFLADFEQLELFPSDANFLFVRPRIADPEAVRVALAGRGSLVRGAAGGLRVTVGTPEQNDRLIANVAALFTPEMR.

K214 bears the N6-(pyridoxal phosphate)lysine mark.

Belongs to the class-II pyridoxal-phosphate-dependent aminotransferase family. Histidinol-phosphate aminotransferase subfamily. Homodimer. Pyridoxal 5'-phosphate serves as cofactor.

The enzyme catalyses L-histidinol phosphate + 2-oxoglutarate = 3-(imidazol-4-yl)-2-oxopropyl phosphate + L-glutamate. The protein operates within amino-acid biosynthesis; L-histidine biosynthesis; L-histidine from 5-phospho-alpha-D-ribose 1-diphosphate: step 7/9. The chain is Histidinol-phosphate aminotransferase from Gloeobacter violaceus (strain ATCC 29082 / PCC 7421).